Consider the following 413-residue polypeptide: Terephthalate 1,2-dioxygenase, terminal oxygenase component subunit alpha 2 (413 aa).

The 104-residue stretch at 41-144 (NYLCLESEIP…CKEEHGPRKL (104 aa)) folds into the Rieske domain. Residues Cys82, His84, Cys102, and His105 each coordinate [2Fe-2S] cluster.

The protein belongs to the bacterial ring-hydroxylating dioxygenase alpha subunit family. In terms of assembly, heterotetramer composed of 2 alpha (TphA2I and TphA2II) and 2 beta (TphA3I and TphA3II) subunits. Part of a multicomponent enzyme system composed of a reductase (TphA1I or TphA1II) and a two-subunit oxygenase component (TphA2I or TphA2II and TphA3I or TphA3II). The cofactor is Fe cation. It depends on [2Fe-2S] cluster as a cofactor.

The catalysed reaction is terephthalate + NADH + O2 + H(+) = (3S,4R)-3,4-dihydroxycyclohexa-1,5-diene-1,4-dicarboxylate + NAD(+). With respect to regulation, inhibited by EDTA. Its function is as follows. Component of the terephthalate 1,2-dioxygenase multicomponent enzyme system which catalyzes the dioxygenation of terephthalate (TER/TPA) to 1,2-dihydroxy-3,5-cyclohexadiene-1,4-dicarboxylic acid (DCD). It can also use 2,5-dicarboxypyridine (PDC) and 1,4-napthalenedicarboxylic acid (NDC) as substrates, and preferentially uses NADPH which is the physiological electron donor. This chain is Terephthalate 1,2-dioxygenase, terminal oxygenase component subunit alpha 2 (tphA2II), found in Comamonas sp.